A 48-amino-acid chain; its full sequence is ATP synthase protein 8 (48 aa).

The chain crosses the membrane as a helical span at residues 13 to 32; that stretch reads LVYGFALVTILLVLFAQYFL.

This sequence belongs to the ATPase protein 8 family. As to quaternary structure, F-type ATPases have 2 components, CF(1) - the catalytic core - and CF(0) - the membrane proton channel.

The protein resides in the mitochondrion membrane. Functionally, mitochondrial membrane ATP synthase (F(1)F(0) ATP synthase or Complex V) produces ATP from ADP in the presence of a proton gradient across the membrane which is generated by electron transport complexes of the respiratory chain. F-type ATPases consist of two structural domains, F(1) - containing the extramembraneous catalytic core and F(0) - containing the membrane proton channel, linked together by a central stalk and a peripheral stalk. During catalysis, ATP synthesis in the catalytic domain of F(1) is coupled via a rotary mechanism of the central stalk subunits to proton translocation. Part of the complex F(0) domain. Minor subunit located with subunit a in the membrane. In Kluyveromyces lactis (strain ATCC 8585 / CBS 2359 / DSM 70799 / NBRC 1267 / NRRL Y-1140 / WM37) (Yeast), this protein is ATP synthase protein 8 (ATP8).